Here is a 926-residue protein sequence, read N- to C-terminus: ABC transporter A family member 6 (926 aa).

Transmembrane regions (helical) follow at residues 34 to 54, 336 to 356, 389 to 409, 418 to 438, 451 to 471, and 525 to 545; these read LIVI…VFDS, ASLI…PVIL, FLAI…AIGL, TIQF…AFLV, VAYI…QFLI, and DEVF…TYYI. The ABC transporter domain maps to 610–847; it reads IVCDNLKKVY…YGGSYVLTIT (238 aa). 648–655 is an ATP binding site; that stretch reads GPNGAGKT.

This sequence belongs to the ABC transporter superfamily. ABCA family. CPR flippase (TC 3.A.1.211) subfamily.

It is found in the membrane. This is ABC transporter A family member 6 (ABCA6) from Arabidopsis thaliana (Mouse-ear cress).